Consider the following 365-residue polypeptide: L-lactate oxidase (365 aa).

Residues threonine 2 to leucine 365 enclose the FMN hydroxy acid dehydrogenase domain. Tyrosine 28 is a pyruvate binding site. FMN contacts are provided by residues proline 81–alanine 83, serine 110, and glutamine 135. Residue tyrosine 137 coordinates pyruvate. Residue threonine 163 coordinates FMN. Arginine 172 contacts pyruvate. Positions 239 and 261 each coordinate FMN. Positions 263 and 266 each coordinate pyruvate. Histidine 263 serves as the catalytic Proton acceptor. FMN contacts are provided by residues aspartate 294–arginine 298 and arginine 318.

It belongs to the FMN-dependent alpha-hydroxy acid dehydrogenase family. Homotetramer. FMN is required as a cofactor.

The enzyme catalyses (S)-lactate + O2 = pyruvate + H2O2. The catalysed reaction is glyoxylate + O2 + H2O = oxalate + H2O2 + H(+). Catalyzes the oxidation of (S)-lactate (L-lactate) to pyruvate, with a reduction of O2 to H2O2. In extant N2-fixing cyanobacteria such as Nostoc, this enzyme primarily serves as an O2-scavenging enzyme, protecting nitrogenase that is extremely sensitive to O2, and is therefore an essential partner in N2 fixation. Also shows clear oxidase activity with glyoxylate in vitro, and low activity with glycerate, hydroxypyruvate and glycolate. The very low glycolate oxidase activity indicates that this enzyme is unlikely to be involved in photorespiratory glycolate metabolism, a pathway that seems to exist in this cyanobacterium, but in which the oxidation of glycolate is taken over by glycolate dehydrogenase (GlcD). Is not able to use D-lactate as substrate and does not show any dehydrogenase activity with NAD(+) or NADP(+). This Nostoc sp. (strain PCC 7120 / SAG 25.82 / UTEX 2576) protein is L-lactate oxidase.